Consider the following 77-residue polypeptide: Large ribosomal subunit protein uL24 (77 aa).

The segment at 42–61 is disordered; it reads KKHQKPSQTNANGGVVESEG.

It belongs to the universal ribosomal protein uL24 family. As to quaternary structure, part of the 50S ribosomal subunit.

In terms of biological role, one of two assembly initiator proteins, it binds directly to the 5'-end of the 23S rRNA, where it nucleates assembly of the 50S subunit. Functionally, one of the proteins that surrounds the polypeptide exit tunnel on the outside of the subunit. In Lactobacillus acidophilus (strain ATCC 700396 / NCK56 / N2 / NCFM), this protein is Large ribosomal subunit protein uL24.